The primary structure comprises 141 residues: Large ribosomal subunit protein uL14 (141 aa).

It belongs to the universal ribosomal protein uL14 family.

This is Large ribosomal subunit protein uL14 (RPL23) from Tetrahymena thermophila (strain SB210).